The primary structure comprises 31 residues: Photosystem II reaction center protein T (31 aa).

The helical transmembrane segment at alanine 3–phenylalanine 23 threads the bilayer.

This sequence belongs to the PsbT family. In terms of assembly, PSII is composed of 1 copy each of membrane proteins PsbA, PsbB, PsbC, PsbD, PsbE, PsbF, PsbH, PsbI, PsbJ, PsbK, PsbL, PsbM, PsbT, PsbX, PsbY, Psb30/Ycf12, peripheral proteins PsbO, CyanoQ (PsbQ), PsbU, PsbV and a large number of cofactors. It forms dimeric complexes.

It localises to the cellular thylakoid membrane. Functionally, found at the monomer-monomer interface of the photosystem II (PS II) dimer, plays a role in assembly and dimerization of PSII. PSII is a light-driven water plastoquinone oxidoreductase, using light energy to abstract electrons from H(2)O, generating a proton gradient subsequently used for ATP formation. The sequence is that of Photosystem II reaction center protein T from Prochlorococcus marinus (strain MIT 9211).